The primary structure comprises 70 residues: Delta-hexatoxin-Mg1b (70 aa).

The N-terminal stretch at Met-1–Arg-26 is a signal peptide. Disulfide bonds link Cys-27–Cys-41, Cys-34–Cys-46, Cys-40–Cys-57, and Cys-42–Cys-68.

In terms of tissue distribution, expressed by the venom gland.

Its subcellular location is the secreted. Functionally, inhibits tetrodotoxin-sensitive sodium channels (Nav). Intracranial injection into mice causes strong convulsions and death. Intrathorax injection into crickets causes paralysis prolonged for 2 minutes, followed by recovery. The polypeptide is Delta-hexatoxin-Mg1b (Macrothele gigas (Japanese funnel web spider)).